The chain runs to 358 residues: MNSLKSLCLKCIVTLCLLVNAFAFDYASLQEQDENLLAACPQYITIYTNGPVPGTTTIYPTSNVASNTSENYPYTGSKSLSSSSILSNSTISTSSSTPITASVPTSSSILSNSTIPTTSPVPTTSSTPTSSSILSNSTIPSSSSISASTITTTIISGSTQFTTTFVDQSIDTVEVVIPTAGYITTTLTSGSSYPVSTTTLQTVSGTQSGLVEVITPSCGCNPENSFHLRLVGDSINPSYVYKNTNVSDPDEGNMYTSTEGNTEAVNVFYYDPTVERILTCDCVRPVYTIYTDDPDSSFDIIKNNNGTFTFVESSSGEIQTLHVSQYGALWITSPEYDGETGGMDDVGFRADDVILVAY.

Positions 1–23 (MNSLKSLCLKCIVTLCLLVNAFA) are cleaved as a signal peptide. N-linked (GlcNAc...) asparagine glycosylation is found at Asn-67, Asn-88, Asn-112, and Asn-136. The disordered stretch occupies residues 90 to 144 (TISTSSSTPITASVPTSSSILSNSTIPTTSPVPTTSSTPTSSSILSNSTIPSSSS). 2 consecutive repeat copies span residues 148-180 (STIT…IPTA) and 181-218 (GYIT…TPSC). Residues 148–218 (STITTTIISG…GLVEVITPSC (71 aa)) are 2 X 36 AA approximate tandem repeats. The DIPSY domain maps to 207-358 (QSGLVEVITP…RADDVILVAY (152 aa)). N-linked (GlcNAc...) asparagine glycans are attached at residues Asn-245 and Asn-305.

It belongs to the mam3/map4 family.

It localises to the cell surface. May be involved in agglutination during conjugation or other aspects of colony formation. Induces flocculation when overexpressed. The sequence is that of Putative cell-type specific agglutination protein pfl7 from Schizosaccharomyces pombe (strain 972 / ATCC 24843) (Fission yeast).